Reading from the N-terminus, the 305-residue chain is Non-homologous end joining protein Ku (305 aa).

The Ku domain maps to 16-202 (SLVSFGISLI…KVDPEQLSLA (187 aa)). The disordered stretch occupies residues 263–305 (GEENGRKKSVSGAQHRSRRKSKGEQKLKVVRSGSSSDKRRKSA).

It belongs to the prokaryotic Ku family. As to quaternary structure, homodimer. Interacts with LigD.

With LigD forms a non-homologous end joining (NHEJ) DNA repair enzyme, which repairs dsDNA breaks with reduced fidelity. Binds linear dsDNA with 5'- and 3'- overhangs but not closed circular dsDNA nor ssDNA. Recruits and stimulates the ligase activity of LigD. The sequence is that of Non-homologous end joining protein Ku from Acidobacterium capsulatum (strain ATCC 51196 / DSM 11244 / BCRC 80197 / JCM 7670 / NBRC 15755 / NCIMB 13165 / 161).